A 243-amino-acid chain; its full sequence is Ribonuclease 3 (243 aa).

The 137-residue stretch at 10-146 (VNRFRKRFDT…FIGALYLDQG (137 aa)) folds into the RNase III domain. A Mg(2+)-binding site is contributed by Glu59. Asp63 is an active-site residue. Positions 132 and 135 each coordinate Mg(2+). The active site involves Glu135. The DRBM domain maps to 172–241 (DFKTQFQEYV…AKSAYKQLKQ (70 aa)). The span at 219-231 (GKGKTKKESEQRA) shows a compositional bias: basic and acidic residues. The disordered stretch occupies residues 219 to 243 (GKGKTKKESEQRAAKSAYKQLKQIK).

This sequence belongs to the ribonuclease III family. As to quaternary structure, homodimer. Requires Mg(2+) as cofactor.

The protein localises to the cytoplasm. It carries out the reaction Endonucleolytic cleavage to 5'-phosphomonoester.. In terms of biological role, digests double-stranded RNA. Involved in the processing of primary rRNA transcript to yield the immediate precursors to the large and small rRNAs (23S and 16S). Processes some mRNAs, and tRNAs when they are encoded in the rRNA operon. Processes pre-crRNA and tracrRNA of type II CRISPR loci if present in the organism. This chain is Ribonuclease 3, found in Staphylococcus aureus (strain Mu3 / ATCC 700698).